The chain runs to 608 residues: Serine/arginine repetitive matrix protein 4 (608 aa).

Disordered stretches follow at residues 34–246 and 261–608; these read ASIT…PLPR and SAAD…STRR. Over residues 78-100 the composition is skewed to basic and acidic residues; it reads GREKACRELDPARAHSASQDRDP. Basic residues-rich tracts occupy residues 107 to 123 and 131 to 187; these read RGKK…RRRS and VKKK…HRCP. Residues 188–200 are compositionally biased toward low complexity; it reads SRSQSSELRSPSC. The span at 201-213 shows a compositional bias: basic and acidic residues; that stretch reads ESRHRGRSPEEGR. Basic residues predominate over residues 214-228; sequence KSRRTHSRRCSKNHC. Positions 289–299 are enriched in low complexity; sequence TSSPPSTQTSS. Positions 322–339 are enriched in polar residues; sequence CGNTSDSGNSFTTSSPQN. Low complexity-rich tracts occupy residues 389–420 and 428–459; these read RSSS…SRST and SRSP…SRYS. Basic and acidic residues predominate over residues 460 to 477; sequence PSRERDLKYGEKEPQPRE. Over residues 478 to 494 the composition is skewed to basic residues; that stretch reads RARRRRRSYSPMRKRRR. Residues 495–504 are compositionally biased toward basic and acidic residues; sequence DSPSHLEARR. Positions 518–555 are enriched in low complexity; sequence PSPSSSSSLSSASSWYSSSSSSSSSSSRSPSRSYSRSR. Positions 556 to 573 are enriched in basic residues; sequence SPSRSHSSRSQTRSRTRT. Over residues 574 to 608 the composition is skewed to low complexity; it reads SRSSSSRSLSLGSRSRSRNRSLSYSSAESYASTRR.

It belongs to the nSR100 family. Post-translationally, phosphorylated. As to expression, specifically expressed in neuronal cells (at protein level). Expressed in adult nervous system and sensory organ tissues.

Its subcellular location is the nucleus. Its function is as follows. Splicing factor specifically required for neural cell differentiation. Acts in conjunction with nPTB/PTBP2 by binding directly to its regulated target transcripts and promotes neural-specific exon inclusion in many genes that function in neural cell differentiation. Required to promote the inclusion of neural-specific exon 10 in nPTB/PTBP2, leading to increased expression of neural-specific nPTB/PTBP2. Also promotes the inclusion of exon 16 in DAAM1 in neuron extracts. Promotes alternative splicing of REST transcripts to produce REST isoform 2 (REST4) with greatly reduced repressive activity, thereby activating expression of REST targets in neural cells. Plays an important role during embryonic development as well as in the proper functioning of the adult nervous system. Regulates alternative splicing events in genes with important neuronal functions. This is Serine/arginine repetitive matrix protein 4 (Srrm4) from Mus musculus (Mouse).